The primary structure comprises 280 residues: Pupal cuticle protein 36a (280 aa).

Positions 1–15 (MKLFVLAAVLGVCLA) are cleaved as a signal peptide. Residues 135 to 198 (AEGFAYDFET…SQGAHLPTPP (64 aa)) enclose the Chitin-binding type R&amp;R domain. The interval 258–280 (GAGRAGGTATSASEAPTTTIRLM) is disordered.

This chain is Pupal cuticle protein 36a (PCP36a), found in Manduca sexta (Tobacco hawkmoth).